The sequence spans 338 residues: Extracellular globin (338 aa).

The signal sequence occupies residues 1–18 (MRSLLLLSIVFFVVTVSA). N-linked (GlcNAc...) asparagine glycosylation occurs at Asn19. Globin domains are found at residues 25 to 167 (CMKS…KHGR) and 174 to 316 (CMRS…RHGK). Heme b contacts are provided by Gln82 and His114. A glycan (N-linked (GlcNAc...) asparagine) is linked at Asn216. The heme b site is built by Gln231 and His263. The tract at residues 313–338 (RHGKEHHEHKEEHKEEHKEEHKEEQH) is disordered.

This sequence belongs to the globin family. In terms of assembly, homooctamer.

Its subcellular location is the secreted. It is found in the extracellular space. Its function is as follows. Has an extremely high oxygen affinity. In a vacuum, it takes several minutes to release its oxygen compared to milliseconds for a normal globin. Could be used as an oxygen scavenger for sterol biosynthesis. The polypeptide is Extracellular globin (Ascaris suum (Pig roundworm)).